We begin with the raw amino-acid sequence, 108 residues long: U-scoloptoxin(16)-Sm1a (108 aa).

The signal sequence occupies residues 1–19; the sequence is MNLFLVLFVFSFSVSQFFA.

Belongs to the scoloptoxin-16 family. In terms of processing, contains 4 disulfide bonds. In terms of tissue distribution, expressed by the venom gland.

The protein localises to the secreted. The protein is U-scoloptoxin(16)-Sm1a of Scolopendra morsitans (Tanzanian blue ringleg centipede).